Consider the following 188-residue polypeptide: Elongation factor P (188 aa).

Lys34 is modified (N6-(3,6-diaminohexanoyl)-5-hydroxylysine).

Belongs to the elongation factor P family. In terms of processing, may be beta-lysylated on the epsilon-amino group of Lys-34 by the combined action of EpmA and EpmB, and then hydroxylated on the C5 position of the same residue by EpmC (if this protein is present). Lysylation is critical for the stimulatory effect of EF-P on peptide-bond formation. The lysylation moiety may extend toward the peptidyltransferase center and stabilize the terminal 3-CCA end of the tRNA. Hydroxylation of the C5 position on Lys-34 may allow additional potential stabilizing hydrogen-bond interactions with the P-tRNA.

It localises to the cytoplasm. It participates in protein biosynthesis; polypeptide chain elongation. Its function is as follows. Involved in peptide bond synthesis. Alleviates ribosome stalling that occurs when 3 or more consecutive Pro residues or the sequence PPG is present in a protein, possibly by augmenting the peptidyl transferase activity of the ribosome. Modification of Lys-34 is required for alleviation. The sequence is that of Elongation factor P from Proteus mirabilis (strain HI4320).